A 441-amino-acid chain; its full sequence is Ribulose bisphosphate carboxylase large chain (441 aa).

At Lys4 the chain carries N6,N6,N6-trimethyllysine. The substrate site is built by Asn113 and Thr163. The active-site Proton acceptor is the Lys165. Residue Lys167 participates in substrate binding. Lys191, Asp193, and Glu194 together coordinate Mg(2+). The residue at position 191 (Lys191) is an N6-carboxylysine. His284 serves as the catalytic Proton acceptor. Arg285, His317, and Ser369 together coordinate substrate.

The protein belongs to the RuBisCO large chain family. Type I subfamily. As to quaternary structure, heterohexadecamer of 8 large chains and 8 small chains; disulfide-linked. The disulfide link is formed within the large subunit homodimers. It depends on Mg(2+) as a cofactor. In terms of processing, the disulfide bond which can form in the large chain dimeric partners within the hexadecamer appears to be associated with oxidative stress and protein turnover.

It localises to the plastid. Its subcellular location is the chloroplast. It catalyses the reaction 2 (2R)-3-phosphoglycerate + 2 H(+) = D-ribulose 1,5-bisphosphate + CO2 + H2O. The enzyme catalyses D-ribulose 1,5-bisphosphate + O2 = 2-phosphoglycolate + (2R)-3-phosphoglycerate + 2 H(+). RuBisCO catalyzes two reactions: the carboxylation of D-ribulose 1,5-bisphosphate, the primary event in carbon dioxide fixation, as well as the oxidative fragmentation of the pentose substrate in the photorespiration process. Both reactions occur simultaneously and in competition at the same active site. In Heliamphora nutans (Venezuelan marsh pitcher plant), this protein is Ribulose bisphosphate carboxylase large chain.